A 331-amino-acid polypeptide reads, in one-letter code: Olfactory receptor 7D11 (331 aa).

The Extracellular segment spans residues 1–25 (MEIENHTLITKFLILGLSDDPELQP). Asn5 carries an N-linked (GlcNAc...) asparagine glycan. Residues 26 to 46 (ILFGLFLSMYLVTLLGNLLII) traverse the membrane as a helical segment. At 47 to 57 (LAVSSDSHLHK) the chain is on the cytoplasmic side. The helical transmembrane segment at 58–78 (PMYFLLSNLSFIDICFISTTI) threads the bilayer. Residues 79-97 (PKMLVNMQSQIKDISYIEC) lie on the Extracellular side of the membrane. Cys97 and Cys179 are joined by a disulfide. Residues 98 to 118 (LTQVFFFNIFAGMDNFLLTLM) form a helical membrane-spanning segment. Residues 119–142 (AYDRFVAICHPLNYTVIMNPRLCA) are Cytoplasmic-facing. Residues 143–163 (LLILMFWIIMFWVSLIHVLLM) form a helical membrane-spanning segment. The Extracellular portion of the chain corresponds to 164–196 (NELNFSRGTEIPHFFCELAQVLKVSNSDNHVNN). N-linked (GlcNAc...) asparagine glycosylation occurs at Asn167. Residues 197 to 217 (VFMYVVTSLLGVIPMTGILMS) traverse the membrane as a helical segment. Over 218–244 (YSQIFSSLFRMSSTVSKYKAFSTCGSH) the chain is Cytoplasmic. The helical transmembrane segment at 245–265 (LCVVTLFYGSGFGVYFSSSVV) threads the bilayer. Over 266-271 (HSTQRR) the chain is Extracellular. A helical membrane pass occupies residues 272-292 (KVASLMYTVISPMLNPFIYTL). At 293-331 (RNKDVKGALGKLFNRVASSPSCINDIRNKLLLRSVRQIL) the chain is on the cytoplasmic side.

It belongs to the G-protein coupled receptor 1 family.

The protein resides in the cell membrane. Possible olfactory or taste receptor. This is Olfactory receptor 7D11 from Mus musculus (Mouse).